The primary structure comprises 143 residues: Large ribosomal subunit protein uL13 (143 aa).

It belongs to the universal ribosomal protein uL13 family. Part of the 50S ribosomal subunit.

In terms of biological role, this protein is one of the early assembly proteins of the 50S ribosomal subunit, although it is not seen to bind rRNA by itself. It is important during the early stages of 50S assembly. In Solibacter usitatus (strain Ellin6076), this protein is Large ribosomal subunit protein uL13.